The following is a 217-amino-acid chain: 3-isopropylmalate dehydratase small subunit (217 aa).

It belongs to the LeuD family. LeuD type 1 subfamily. As to quaternary structure, heterodimer of LeuC and LeuD.

It carries out the reaction (2R,3S)-3-isopropylmalate = (2S)-2-isopropylmalate. Its pathway is amino-acid biosynthesis; L-leucine biosynthesis; L-leucine from 3-methyl-2-oxobutanoate: step 2/4. Its function is as follows. Catalyzes the isomerization between 2-isopropylmalate and 3-isopropylmalate, via the formation of 2-isopropylmaleate. This is 3-isopropylmalate dehydratase small subunit from Paraburkholderia phymatum (strain DSM 17167 / CIP 108236 / LMG 21445 / STM815) (Burkholderia phymatum).